The sequence spans 258 residues: Probable pectin methylesterase CGR3 (258 aa).

At 1-29 (MSRRQVRRVGDSGSFPFVGALHSKSRSSP) the chain is on the cytoplasmic side. Residues 30-50 (LLSVCLVLVGACLLIGYAYSG) traverse the membrane as a helical segment. Residues 51-258 (PGMFKSIREV…CQVFHLKPLH (208 aa)) lie on the Lumenal side of the membrane. N-linked (GlcNAc...) asparagine glycosylation occurs at N171.

It belongs to the class I-like SAM-binding methyltransferase superfamily.

It is found in the golgi apparatus membrane. In terms of biological role, together with CGR2, required for homogalacturonan pectins (HG) methylesterification in the Golgi apparatus prior to integration into cell walls, essential for general growth and development. Promotes petiole elongation. Impacts photosynthesis and respiration efficiency by influencing leaf mesophyll morphology and physiology; pectin methylesterification modulates both expansion and positioning of cells in leaves, probably by changing cell walls plasticity. The sequence is that of Probable pectin methylesterase CGR3 from Arabidopsis thaliana (Mouse-ear cress).